The primary structure comprises 115 residues: Guanylin (115 aa).

Positions 1-21 (MNACVLSVLCLLGAVAVLVEG) are cleaved as a signal peptide. The propeptide occupies 22 to 100 (VTVQDGDLSF…LQRLEAIAQD (79 aa)). 3 disulfides stabilise this stretch: Cys69–Cys82, Cys104–Cys112, and Cys107–Cys115.

This sequence belongs to the guanylin family.

It localises to the secreted. Its function is as follows. Endogenous activator of intestinal guanylate cyclase. It stimulates this enzyme through the same receptor binding region as the heat-stable enterotoxins. This is Guanylin (GUCA2A) from Notomys alexis (Spinifex hopping mouse).